The sequence spans 246 residues: 1-(5-phosphoribosyl)-5-[(5-phosphoribosylamino)methylideneamino] imidazole-4-carboxamide isomerase (246 aa).

Residue Asp8 is the Proton acceptor of the active site. Asp131 serves as the catalytic Proton donor.

It belongs to the HisA/HisF family.

Its subcellular location is the cytoplasm. It carries out the reaction 1-(5-phospho-beta-D-ribosyl)-5-[(5-phospho-beta-D-ribosylamino)methylideneamino]imidazole-4-carboxamide = 5-[(5-phospho-1-deoxy-D-ribulos-1-ylimino)methylamino]-1-(5-phospho-beta-D-ribosyl)imidazole-4-carboxamide. It participates in amino-acid biosynthesis; L-histidine biosynthesis; L-histidine from 5-phospho-alpha-D-ribose 1-diphosphate: step 4/9. The polypeptide is 1-(5-phosphoribosyl)-5-[(5-phosphoribosylamino)methylideneamino] imidazole-4-carboxamide isomerase (Polaromonas sp. (strain JS666 / ATCC BAA-500)).